The following is a 113-amino-acid chain: uncharacterized protein (113 aa).

It localises to the mitochondrion. This is an uncharacterized protein from Arabidopsis thaliana (Mouse-ear cress).